The sequence spans 398 residues: Carbamoyl phosphate synthase large chain (398 aa).

The ATP-grasp domain occupies 1-187 (KLGVPQPEGG…LAKIAAKVIV (187 aa)). Positions 1–255 (KLGVPQPEGG…YKAELAADNV (255 aa)) are carbamoyl phosphate synthetic domain. Residues Arg-32, Asp-71, Leu-73, Glu-78, Gly-103, Val-104, His-105, Ser-106, Gln-146, and Glu-158 each contribute to the ATP site. Positions 146, 158, and 160 each coordinate Mg(2+). Residues Gln-146, Glu-158, and Asn-160 each coordinate Mn(2+). The MGS-like domain occupies 254–395 (NVLPLTGKVF…NEYHKEMEEE (142 aa)). Residues 256 to 398 (LPLTGKVFLS…HKEMEEENKV (143 aa)) form an allosteric domain region.

This sequence belongs to the CarB family. As to quaternary structure, composed of two chains; the small (or glutamine) chain promotes the hydrolysis of glutamine to ammonia, which is used by the large (or ammonia) chain to synthesize carbamoyl phosphate. Tetramer of heterodimers (alpha,beta)4. Mg(2+) serves as cofactor. The cofactor is Mn(2+).

It catalyses the reaction hydrogencarbonate + L-glutamine + 2 ATP + H2O = carbamoyl phosphate + L-glutamate + 2 ADP + phosphate + 2 H(+). The enzyme catalyses hydrogencarbonate + NH4(+) + 2 ATP = carbamoyl phosphate + 2 ADP + phosphate + 2 H(+). Its pathway is amino-acid biosynthesis; L-arginine biosynthesis; carbamoyl phosphate from bicarbonate: step 1/1. It functions in the pathway pyrimidine metabolism; UMP biosynthesis via de novo pathway; (S)-dihydroorotate from bicarbonate: step 1/3. In terms of biological role, large subunit of the glutamine-dependent carbamoyl phosphate synthetase (CPSase). CPSase catalyzes the formation of carbamoyl phosphate from the ammonia moiety of glutamine, carbonate, and phosphate donated by ATP, constituting the first step of 2 biosynthetic pathways, one leading to arginine and/or urea and the other to pyrimidine nucleotides. The large subunit (synthetase) binds the substrates ammonia (free or transferred from glutamine from the small subunit), hydrogencarbonate and ATP and carries out an ATP-coupled ligase reaction, activating hydrogencarbonate by forming carboxy phosphate which reacts with ammonia to form carbamoyl phosphate. The protein is Carbamoyl phosphate synthase large chain of Methanosarcina barkeri.